Reading from the N-terminus, the 185-residue chain is Peptidyl-tRNA hydrolase (185 aa).

Tyrosine 14 is a binding site for tRNA. The active-site Proton acceptor is the histidine 19. Residues tyrosine 65, asparagine 67, and asparagine 113 each coordinate tRNA.

The protein belongs to the PTH family. In terms of assembly, monomer.

Its subcellular location is the cytoplasm. It carries out the reaction an N-acyl-L-alpha-aminoacyl-tRNA + H2O = an N-acyl-L-amino acid + a tRNA + H(+). Functionally, hydrolyzes ribosome-free peptidyl-tRNAs (with 1 or more amino acids incorporated), which drop off the ribosome during protein synthesis, or as a result of ribosome stalling. Catalyzes the release of premature peptidyl moieties from peptidyl-tRNA molecules trapped in stalled 50S ribosomal subunits, and thus maintains levels of free tRNAs and 50S ribosomes. This is Peptidyl-tRNA hydrolase from Rickettsia akari (strain Hartford).